The sequence spans 661 residues: UvrABC system protein B (661 aa).

A Helicase ATP-binding domain is found at 25 to 182 (AGLSSKKRSQ…NDLINLQYER (158 aa)). 38–45 (GITGSGKT) is an ATP binding site. The short motif at 91 to 114 (YYDYYQPEAYIARTDTFIEKDSSI) is the Beta-hairpin element. The region spanning 430–592 (QIEDLISEIQ…IIPKTINRTI (163 aa)) is the Helicase C-terminal domain. A UVR domain is found at 621-656 (KTHIDKLKKEMLKAASNLEFEQAAKLRDQLKTLEEA).

The protein belongs to the UvrB family. As to quaternary structure, forms a heterotetramer with UvrA during the search for lesions. Interacts with UvrC in an incision complex.

The protein localises to the cytoplasm. Functionally, the UvrABC repair system catalyzes the recognition and processing of DNA lesions. A damage recognition complex composed of 2 UvrA and 2 UvrB subunits scans DNA for abnormalities. Upon binding of the UvrA(2)B(2) complex to a putative damaged site, the DNA wraps around one UvrB monomer. DNA wrap is dependent on ATP binding by UvrB and probably causes local melting of the DNA helix, facilitating insertion of UvrB beta-hairpin between the DNA strands. Then UvrB probes one DNA strand for the presence of a lesion. If a lesion is found the UvrA subunits dissociate and the UvrB-DNA preincision complex is formed. This complex is subsequently bound by UvrC and the second UvrB is released. If no lesion is found, the DNA wraps around the other UvrB subunit that will check the other stand for damage. The sequence is that of UvrABC system protein B from Rickettsia massiliae (strain Mtu5).